Here is a 1275-residue protein sequence, read N- to C-terminus: Membrane-associated guanylate kinase, WW and PDZ domain-containing protein 2 (1275 aa).

One can recognise a PDZ 1 domain in the interval 17–101 (ESVIGRNPEG…PLRLKCVKQG (85 aa)). The Guanylate kinase-like domain occupies 109–283 (RHYLNLRFQK…PVYSQPEELK (175 aa)). Residues 203 to 305 (LPGATPSAEG…ENEDSDPLPD (103 aa)) are disordered. The segment covering 280 to 295 (EELKDQMDDTKPTKPE) has biased composition (basic and acidic residues). WW domains lie at 301-334 (DPLP…DPRL) and 347-380 (NELP…NPVL). The interaction with DDN stretch occupies residues 301-380 (DPLPDNWEMA…RRTQFENPVL (80 aa)). Position 361 is a phosphotyrosine (Tyr-361). PDZ domains lie at 425 to 509 (STTL…CRGY) and 604 to 682 (TLTI…HRGG). The residue at position 685 (Ser-685) is a Phosphoserine. A disordered region spans residues 698–740 (ENQGSPQTSLSAPAVPQNLPFPPALHRSSFPDSTEAFDPRKPD). Over residues 699 to 708 (NQGSPQTSLS) the composition is skewed to polar residues. In terms of domain architecture, PDZ 4 spans 777-859 (DVHLRRMESG…NGQVNLTVRR (83 aa)). The residue at position 826 (Tyr-826) is a Phosphotyrosine. The tract at residues 868–912 (CPENGRSPGSVSTHHSSPRSDYATYSNSNHAAPSSNASPPEGFAS) is disordered. Residues Ser-883 and Ser-884 each carry the phosphoserine modification. Over residues 893–907 (SNSNHAAPSSNASPP) the composition is skewed to low complexity. Residues 919–1009 (DVVIHRKENE…SVTLRIIPQE (91 aa)) enclose the PDZ 5 domain. Residues 1010–1040 (ELNSPTSAPSSEKQSPMAQQHSPLAQQSPLA) show a composition bias toward polar residues. A disordered region spans residues 1010-1128 (ELNSPTSAPS…PDTRQYPLSD (119 aa)). Position 1013 is a phosphoserine (Ser-1013). Basic and acidic residues predominate over residues 1067–1083 (NSYRSEVKARQDVKPDI). A PDZ 6 domain is found at 1139–1221 (TVDMEKGAKG…RVRLLLKRGT (83 aa)).

The protein belongs to the MAGUK family. As to quaternary structure, interacts (via its WW domains) with DRPLA. Interacts (via its second PDZ domain) with PTEN (via unphosphorylated C-terminus); this interaction diminishes the degradation rate of PTEN. Interacts (via guanylate kinase domain) with DLGAP1. Interacts (via the PDZ domains) with GRIN2A, GRID2 and NLGN1. Interacts with CTNND2, CTNNB1 and MAGUIN-1. Interacts with ACVR2A, SMAD2 and SMAD3. Part of a complex consisting of MAGI2/ARIP1, ACVR2A, ACVR1B and SMAD3. May interact with HTR2A. Interacts with RAPGEF2. Identified in a complex with ACTN4, CASK, IQGAP1, NPHS1, SPTAN1 and SPTBN1. Interacts with DDN. Found in a complex, at least composed of KIDINS220, MAGI2, NTRK1 and RAPGEF2; the complex is mainly formed at late endosomes in a NGF-dependent manner. Interacts with RAPGEF2; the interaction occurs before or after nerve growth factor (NGF) stimulation. Interacts (via PDZ domain) with KIDINS220 (via C-terminal domain). Interacts with IGSF9 and HTR4. Interacts with DLL1. Found in a complex with IGSF9B and NLGN2; the interaction with IGSF9B is mediated via the PDZ 5 and PDZ 6 domains, while the interaction with NLGN2 is mediated via the WW1, WW2 and PDZ2 domains. Interacts (via PDZ 6 domain) with USH1G (via SAM domain); the interaction is triggered by phosphorylation of USH1G by CK2 and negatively regulates MAGI2-mediated endocytosis. As to expression, expressed throughout the retina except in the nuclear layers and the photoreceptor outer segments (at protein level). Highest retinal expression is observed in the outer plexiform layer, the outer limiting membrane and the inner segment of photoreceptor cells (at protein level). Expressed in brain.

Its subcellular location is the cytoplasm. It is found in the late endosome. It localises to the synapse. The protein resides in the synaptosome. The protein localises to the cell membrane. Its subcellular location is the cytoskeleton. It is found in the microtubule organizing center. It localises to the centrosome. The protein resides in the cell projection. The protein localises to the cilium. Its subcellular location is the centriole. It is found in the photoreceptor inner segment. It localises to the photoreceptor outer segment. Functionally, seems to act as a scaffold molecule at synaptic junctions by assembling neurotransmitter receptors and cell adhesion proteins. Plays a role in nerve growth factor (NGF)-induced recruitment of RAPGEF2 to late endosomes and neurite outgrowth. May play a role in regulating activin-mediated signaling in neuronal cells. Enhances the ability of PTEN to suppress AKT1 activation. Plays a role in receptor-mediated clathrin-dependent endocytosis which is required for ciliogenesis. This chain is Membrane-associated guanylate kinase, WW and PDZ domain-containing protein 2 (Magi2), found in Mus musculus (Mouse).